The following is a 302-amino-acid chain: N-acetylmuramic acid 6-phosphate etherase (302 aa).

Positions 57-220 (IADRFRSNGR…TTGAMIRIGK (164 aa)) constitute an SIS domain. The active-site Proton donor is the E85. Residue E116 is part of the active site.

This sequence belongs to the GCKR-like family. MurNAc-6-P etherase subfamily. Homodimer.

The catalysed reaction is N-acetyl-D-muramate 6-phosphate + H2O = N-acetyl-D-glucosamine 6-phosphate + (R)-lactate. It participates in amino-sugar metabolism; N-acetylmuramate degradation. Functionally, specifically catalyzes the cleavage of the D-lactyl ether substituent of MurNAc 6-phosphate, producing GlcNAc 6-phosphate and D-lactate. The sequence is that of N-acetylmuramic acid 6-phosphate etherase from Rhodopirellula baltica (strain DSM 10527 / NCIMB 13988 / SH1).